A 503-amino-acid chain; its full sequence is Aminoaldehyde dehydrogenase 1, peroxisomal (503 aa).

Residues isoleucine 28, aspartate 99, and leucine 189 each contribute to the Na(+) site. Residue 238 to 245 (GSTMTGSK) coordinates NAD(+). Catalysis depends on glutamate 260, which acts as the Proton acceptor. The NAD(+) site is built by cysteine 294 and glutamate 393. The active-site Nucleophile is the cysteine 294.

The protein belongs to the aldehyde dehydrogenase family. As to expression, expressed in leaves, flowers and fruits.

Its subcellular location is the cytoplasm. The protein localises to the cytosol. The enzyme catalyses 4-aminobutanal + NAD(+) + H2O = 4-aminobutanoate + NADH + 2 H(+). It carries out the reaction 3-aminopropanal + NAD(+) + H2O = beta-alanine + NADH + 2 H(+). Its pathway is amine and polyamine biosynthesis; betaine biosynthesis via choline pathway; betaine from betaine aldehyde: step 1/1. Its function is as follows. Dehydrogenase that catalyzes the oxidation of several aminoaldehydes. Metabolizes and detoxifies aldehyde products of polyamine degradation to non-toxic amino acids. Catalyzes the oxidation of 4-aminobutanal and 3-aminopropanal to 4-aminobutanoate and beta-alanine, respectively. This chain is Aminoaldehyde dehydrogenase 1, peroxisomal, found in Malus domestica (Apple).